Reading from the N-terminus, the 433-residue chain is Xylose isomerase (433 aa).

Active-site residues include His99 and Asp102. Positions 230, 266, 269, 294, 305, 307, and 337 each coordinate Mg(2+).

Belongs to the xylose isomerase family. As to quaternary structure, homotetramer. Mg(2+) is required as a cofactor.

The protein localises to the cytoplasm. The catalysed reaction is alpha-D-xylose = alpha-D-xylulofuranose. The sequence is that of Xylose isomerase from Roseobacter denitrificans (strain ATCC 33942 / OCh 114) (Erythrobacter sp. (strain OCh 114)).